The sequence spans 892 residues: Translation initiation factor IF-2 (892 aa).

Residues lysine 88–proline 304 form a disordered region. Basic and acidic residues-rich tracts occupy residues valine 93–valine 159 and aspartate 166–lysine 216. The segment covering glycine 254–lysine 269 has biased composition (basic residues). The span at histidine 270–alanine 282 shows a compositional bias: basic and acidic residues. A tr-type G domain is found at proline 391–lysine 560. The tract at residues glycine 400–threonine 407 is G1. Glycine 400 to threonine 407 is a binding site for GTP. The tract at residues glycine 425–histidine 429 is G2. The G3 stretch occupies residues aspartate 446 to glycine 449. GTP contacts are provided by residues aspartate 446 to histidine 450 and asparagine 500 to aspartate 503. Residues asparagine 500–aspartate 503 form a G4 region. The interval serine 536–lysine 538 is G5.

Belongs to the TRAFAC class translation factor GTPase superfamily. Classic translation factor GTPase family. IF-2 subfamily.

It localises to the cytoplasm. Its function is as follows. One of the essential components for the initiation of protein synthesis. Protects formylmethionyl-tRNA from spontaneous hydrolysis and promotes its binding to the 30S ribosomal subunits. Also involved in the hydrolysis of GTP during the formation of the 70S ribosomal complex. This is Translation initiation factor IF-2 from Salmonella choleraesuis (strain SC-B67).